The chain runs to 846 residues: DNA mismatch repair protein MutS (846 aa).

Position 610 to 617 (610 to 617 (GPNMGGKS)) interacts with ATP.

This sequence belongs to the DNA mismatch repair MutS family.

Functionally, this protein is involved in the repair of mismatches in DNA. It is possible that it carries out the mismatch recognition step. This protein has a weak ATPase activity. The sequence is that of DNA mismatch repair protein MutS from Legionella pneumophila (strain Lens).